A 201-amino-acid chain; its full sequence is Imidazoleglycerol-phosphate dehydratase (201 aa).

This sequence belongs to the imidazoleglycerol-phosphate dehydratase family.

It localises to the cytoplasm. It catalyses the reaction D-erythro-1-(imidazol-4-yl)glycerol 3-phosphate = 3-(imidazol-4-yl)-2-oxopropyl phosphate + H2O. It participates in amino-acid biosynthesis; L-histidine biosynthesis; L-histidine from 5-phospho-alpha-D-ribose 1-diphosphate: step 6/9. In Methanopyrus kandleri (strain AV19 / DSM 6324 / JCM 9639 / NBRC 100938), this protein is Imidazoleglycerol-phosphate dehydratase.